Here is a 525-residue protein sequence, read N- to C-terminus: ATP-dependent RNA helicase dbp8 (525 aa).

Over residues 1–29 the composition is skewed to polar residues; sequence MAPLSTPESISREISVSSDASADESTSLD. The disordered stretch occupies residues 1-76; sequence MAPLSTPESI…TNATSSRKDD (76 aa). The Q motif signature appears at 95–123; the sequence is NSFKALNVAPWLVGSLTTMAVRKPTAIQR. Residues 126 to 305 enclose the Helicase ATP-binding domain; that stretch reads IPEILKGRDC…SMPQTPGKPP (180 aa). 139–146 is a binding site for ATP; that stretch reads SRTGSGKT. Positions 248–251 match the DEAD box motif; sequence DEAD. The Helicase C-terminal domain maps to 337–484; the sequence is AFLHVLLSTE…EYEEEGVNLE (148 aa).

This sequence belongs to the DEAD box helicase family. DDX49/DBP8 subfamily.

The protein localises to the nucleus. It localises to the nucleolus. The catalysed reaction is ATP + H2O = ADP + phosphate + H(+). In terms of biological role, ATP-binding RNA helicase involved in 40S ribosomal subunit biogenesis and is required for the normal formation of 18S rRNAs through pre-rRNA processing at A0, A1 and A2 sites. Required for vegetative growth. The sequence is that of ATP-dependent RNA helicase dbp8 (dbp8) from Emericella nidulans (strain FGSC A4 / ATCC 38163 / CBS 112.46 / NRRL 194 / M139) (Aspergillus nidulans).